The following is a 299-amino-acid chain: tRNA dimethylallyltransferase (299 aa).

13–20 (GPTASGKT) provides a ligand contact to ATP. Residue 15–20 (TASGKT) participates in substrate binding. The interval 38–41 (DSRQ) is interaction with substrate tRNA.

It belongs to the IPP transferase family. Monomer. The cofactor is Mg(2+).

It catalyses the reaction adenosine(37) in tRNA + dimethylallyl diphosphate = N(6)-dimethylallyladenosine(37) in tRNA + diphosphate. In terms of biological role, catalyzes the transfer of a dimethylallyl group onto the adenine at position 37 in tRNAs that read codons beginning with uridine, leading to the formation of N6-(dimethylallyl)adenosine (i(6)A). The polypeptide is tRNA dimethylallyltransferase (Prochlorococcus marinus (strain NATL2A)).